The following is a 510-amino-acid chain: Probable cytochrome P450 4d20 (510 aa).

Position 455 (Cys455) interacts with heme.

Belongs to the cytochrome P450 family. It depends on heme as a cofactor.

It is found in the endoplasmic reticulum membrane. The protein localises to the microsome membrane. Functionally, may be involved in the metabolism of insect hormones and in the breakdown of synthetic insecticides. This Drosophila melanogaster (Fruit fly) protein is Probable cytochrome P450 4d20 (Cyp4d20).